The sequence spans 429 residues: Enolase (429 aa).

A (2R)-2-phosphoglycerate-binding site is contributed by Q162. E204 (proton donor) is an active-site residue. Mg(2+) contacts are provided by D241, E288, and D315. Residues K340, R369, S370, and K391 each contribute to the (2R)-2-phosphoglycerate site. The active-site Proton acceptor is the K340.

It belongs to the enolase family. It depends on Mg(2+) as a cofactor.

It is found in the cytoplasm. It localises to the secreted. The protein localises to the cell surface. The catalysed reaction is (2R)-2-phosphoglycerate = phosphoenolpyruvate + H2O. The protein operates within carbohydrate degradation; glycolysis; pyruvate from D-glyceraldehyde 3-phosphate: step 4/5. Functionally, catalyzes the reversible conversion of 2-phosphoglycerate (2-PG) into phosphoenolpyruvate (PEP). It is essential for the degradation of carbohydrates via glycolysis. This is Enolase from Bacteroides fragilis (strain ATCC 25285 / DSM 2151 / CCUG 4856 / JCM 11019 / LMG 10263 / NCTC 9343 / Onslow / VPI 2553 / EN-2).